We begin with the raw amino-acid sequence, 507 residues long: Ribosomal protein uS12 methylthiotransferase RimO (507 aa).

Positions 13–124 (RRVALLTLGC…ISDRLGAVLA (112 aa)) constitute an MTTase N-terminal domain. 6 residues coordinate [4Fe-4S] cluster: Cys-22, Cys-58, Cys-87, Cys-205, Cys-209, and Cys-212. In terms of domain architecture, Radical SAM core spans 191–422 (LDTGPVASLK…ALADELCAQR (232 aa)). Positions 424–497 (EQRLGSTVQV…GVDLVAVPDA (74 aa)) constitute a TRAM domain.

This sequence belongs to the methylthiotransferase family. RimO subfamily. The cofactor is [4Fe-4S] cluster.

It is found in the cytoplasm. The catalysed reaction is L-aspartate(89)-[ribosomal protein uS12]-hydrogen + (sulfur carrier)-SH + AH2 + 2 S-adenosyl-L-methionine = 3-methylsulfanyl-L-aspartate(89)-[ribosomal protein uS12]-hydrogen + (sulfur carrier)-H + 5'-deoxyadenosine + L-methionine + A + S-adenosyl-L-homocysteine + 2 H(+). Functionally, catalyzes the methylthiolation of an aspartic acid residue of ribosomal protein uS12. The protein is Ribosomal protein uS12 methylthiotransferase RimO of Salinispora tropica (strain ATCC BAA-916 / DSM 44818 / JCM 13857 / NBRC 105044 / CNB-440).